The following is a 311-amino-acid chain: Putative S-adenosyl-L-methionine-dependent methyltransferase MRA_0152 (311 aa).

Residues Asp135 and Asp164–Leu165 each bind S-adenosyl-L-methionine.

The protein belongs to the UPF0677 family.

In terms of biological role, exhibits S-adenosyl-L-methionine-dependent methyltransferase activity. The sequence is that of Putative S-adenosyl-L-methionine-dependent methyltransferase MRA_0152 from Mycobacterium tuberculosis (strain ATCC 25177 / H37Ra).